The following is a 144-amino-acid chain: Mannitol-specific phosphotransferase enzyme IIA component (144 aa).

The region spanning 3–142 (ELFSNDNIFL…EEIKQVFEEA (140 aa)) is the PTS EIIA type-2 domain. The Tele-phosphohistidine intermediate role is filled by H63. Position 63 is a phosphohistidine; by HPr (H63).

In terms of assembly, homodimer or homotrimer. Seems to be a monomer when not phosphorylated.

The protein resides in the cytoplasm. In terms of biological role, the phosphoenolpyruvate-dependent sugar phosphotransferase system (sugar PTS), a major carbohydrate active transport system, catalyzes the phosphorylation of incoming sugar substrates concomitantly with their translocation across the cell membrane. The enzyme II CmtAB PTS system is involved in D-mannitol transport. In Staphylococcus aureus (strain COL), this protein is Mannitol-specific phosphotransferase enzyme IIA component (mtlF).